The primary structure comprises 375 residues: Lipid-A-disaccharide synthase (375 aa).

It belongs to the LpxB family.

The catalysed reaction is a lipid X + a UDP-2-N,3-O-bis[(3R)-3-hydroxyacyl]-alpha-D-glucosamine = a lipid A disaccharide + UDP + H(+). The protein operates within bacterial outer membrane biogenesis; LPS lipid A biosynthesis. Condensation of UDP-2,3-diacylglucosamine and 2,3-diacylglucosamine-1-phosphate to form lipid A disaccharide, a precursor of lipid A, a phosphorylated glycolipid that anchors the lipopolysaccharide to the outer membrane of the cell. The protein is Lipid-A-disaccharide synthase of Pseudomonas putida (strain ATCC 700007 / DSM 6899 / JCM 31910 / BCRC 17059 / LMG 24140 / F1).